A 352-amino-acid chain; its full sequence is Maleylacetate reductase (352 aa).

The protein belongs to the iron-containing alcohol dehydrogenase family.

It catalyses the reaction 3-oxoadipate + NAD(+) = maleylacetate + NADH + H(+). The catalysed reaction is 3-oxoadipate + NADP(+) = maleylacetate + NADPH + H(+). It functions in the pathway aromatic compound metabolism; 3-chlorocatechol degradation. This is Maleylacetate reductase (clcE) from Pseudomonas knackmussii (strain DSM 6978 / CCUG 54928 / LMG 23759 / B13).